A 123-amino-acid chain; its full sequence is Small ribosomal subunit protein uS12c (123 aa).

Belongs to the universal ribosomal protein uS12 family. Part of the 30S ribosomal subunit.

It localises to the plastid. It is found in the chloroplast. In terms of biological role, with S4 and S5 plays an important role in translational accuracy. Located at the interface of the 30S and 50S subunits. The chain is Small ribosomal subunit protein uS12c (rps12) from Oenothera elata subsp. hookeri (Hooker's evening primrose).